The following is a 302-amino-acid chain: Protease HtpX homolog (302 aa).

Residues 27–47 (LLMAIGGIIGGTAGMLIALII) form a helical membrane-spanning segment. Position 141 (His-141) interacts with Zn(2+). Glu-142 is a catalytic residue. His-145 is a Zn(2+) binding site. Transmembrane regions (helical) follow at residues 151–171 (VLVA…ANMA) and 195–215 (IGAI…QLAI). Glu-220 contacts Zn(2+).

This sequence belongs to the peptidase M48B family. Zn(2+) serves as cofactor.

It localises to the cell inner membrane. The polypeptide is Protease HtpX homolog (Aquifex aeolicus (strain VF5)).